The primary structure comprises 278 residues: Orotidine 5'-phosphate decarboxylase (278 aa).

Residues Asp-40, 62 to 64 (KTH), 93 to 102 (DRKFIDIGNT), Tyr-229, and Arg-247 contribute to the substrate site. Lys-95 functions as the Proton donor in the catalytic mechanism.

Belongs to the OMP decarboxylase family.

The enzyme catalyses orotidine 5'-phosphate + H(+) = UMP + CO2. It functions in the pathway pyrimidine metabolism; UMP biosynthesis via de novo pathway; UMP from orotate: step 2/2. In Aspergillus fumigatus (strain ATCC MYA-4609 / CBS 101355 / FGSC A1100 / Af293) (Neosartorya fumigata), this protein is Orotidine 5'-phosphate decarboxylase (pyrG).